The sequence spans 354 residues: Homer protein homolog 2 (354 aa).

A WH1 domain is found at 1 to 110 (MGEQPIFTTR…EKFQEVREAA (110 aa)). A coiled-coil region spans residues 92 to 120 (SEQQLTKFAEKFQEVREAARLARDKSQEK). Residues 114–163 (RDKSQEKIETSSNHSQESGCETPSSTQASSVNGTDDEKASHASPADTHLK) are disordered. Polar residues predominate over residues 123 to 146 (TSSNHSQESGCETPSSTQASSVNG). Residues 160–329 (THLKSENDKL…RHLKGELKSF (170 aa)) adopt a coiled-coil conformation.

This sequence belongs to the Homer family. As to quaternary structure, isoform 1 and isoform 2 encode coiled-coil structures that mediate homo- and heteromultimerization. Interacts with NFATC2; interaction is reduced by AKT activation. Interacts with NFATC1 and NFATC4. Interacts with DAGLA (via PPXXF motif); this interaction is required for the cell membrane localization of DAGLA. In terms of tissue distribution, constitutively expressed in the adult hippocampus.

The protein resides in the cytoplasm. It is found in the cell membrane. It localises to the postsynaptic density. Its subcellular location is the synapse. The protein localises to the cell projection. The protein resides in the stereocilium. Its function is as follows. Postsynaptic density scaffolding protein. Binds and cross-links cytoplasmic regions of GRM1, GRM5, ITPR1, DNM3, RYR1, RYR2, SHANK1 and SHANK3. By physically linking GRM1 and GRM5 with ER-associated ITPR1 receptors, it aids the coupling of surface receptors to intracellular calcium release. May also couple GRM1 to PI3 kinase through its interaction with AGAP2. Isoforms can be differently regulated and may play an important role in maintaining the plasticity at glutamatergic synapses. Required for normal hearing. Negatively regulates T cell activation by inhibiting the calcineurin-NFAT pathway. Acts by competing with calcineurin/PPP3CA for NFAT protein binding, hence preventing NFAT activation by PPP3CA. The protein is Homer protein homolog 2 of Rattus norvegicus (Rat).